Reading from the N-terminus, the 232-residue chain is Ribose-5-phosphate isomerase A (232 aa).

Residues 31–34, 87–90, and 100–103 each bind substrate; these read TGST, DGAD, and KGGG. Residue E109 is the Proton acceptor of the active site. Substrate is bound at residue K127.

It belongs to the ribose 5-phosphate isomerase family. In terms of assembly, homodimer.

It carries out the reaction aldehydo-D-ribose 5-phosphate = D-ribulose 5-phosphate. The protein operates within carbohydrate degradation; pentose phosphate pathway; D-ribose 5-phosphate from D-ribulose 5-phosphate (non-oxidative stage): step 1/1. Its function is as follows. Catalyzes the reversible conversion of ribose-5-phosphate to ribulose 5-phosphate. The chain is Ribose-5-phosphate isomerase A from Bifidobacterium longum subsp. infantis (strain ATCC 15697 / DSM 20088 / JCM 1222 / NCTC 11817 / S12).